A 456-amino-acid polypeptide reads, in one-letter code: Cell cycle checkpoint control protein Rad9 (456 aa).

The Nuclear localization signal signature appears at 300 to 302 (KRK).

Belongs to the rad9 family. Component of the 9-1-1 checkpoint clamp complex consisting of Rad9 isoform A, Rad1 and Hus1-like; the interaction with Hus1-like is direct. Does not interact directly with Rad1; this interaction is probably mediated by Hus1-like. This complex probably also forms with Rad9 isoform B, however 9-1-1 complex containing Rad9 isoform A localizes to the nuclear periphery. Interacts with Brca2. In terms of tissue distribution, expressed in ovary.

The protein localises to the nucleus envelope. The protein resides in the nucleus. Its function is as follows. Component of the Rad9-Rad1-Hus1 (9-1-1) checkpoint clamp complex. Functionally, targets the 9-1-1 complex to the nuclear periphery. Targeting to the nuclear periphery is disrupted in the presence of persistent double stranded break DNA damage, possibly as a function of the meiotic checkpoint. This chain is Cell cycle checkpoint control protein Rad9, found in Drosophila melanogaster (Fruit fly).